The sequence spans 444 residues: Orexin receptor type 2 (444 aa).

Over residues 1-10 (MSGTKLEDSP) the composition is skewed to basic and acidic residues. A disordered region spans residues 1-30 (MSGTKLEDSPPCRNWSSAPELNETQEPFLN). Topologically, residues 1-54 (MSGTKLEDSPPCRNWSSAPELNETQEPFLNPTDYDDEEFLRYLWREYLHPKEYE) are extracellular. N-linked (GlcNAc...) asparagine glycosylation is found at Asn14 and Asn22. Residues 14–27 (NWSSAPELNETQEP) are compositionally biased toward polar residues. The segment at 33–49 (DYDDEEFLRYLWREYLH) is required for response to orexin-A. The chain crosses the membrane as a helical span at residues 55 to 75 (WVLIAGYIIVFVVALVGNVLV). Topologically, residues 76–88 (CVAVWKNHHMRTV) are cytoplasmic. Residues 89–110 (TNYFIVNLSLADVLVTITCLPA) form a helical membrane-spanning segment. Over 111 to 127 (TLVVDITETWFFGQSLC) the chain is Extracellular. An intrachain disulfide couples Cys127 to Cys210. Residues 128–150 (KVIPYLQTVSVSVSVLTLSCIAL) traverse the membrane as a helical segment. At 151–170 (DRWYAICHPLMFKSTAKRAR) the chain is on the cytoplasmic side. Residues 171-191 (NSIVIIWIVSCIIMIPQAIVM) traverse the membrane as a helical segment. Residues 192 to 222 (ECSTMLPGLANKTTLFTVCDERWGGEIYPKM) lie on the Extracellular side of the membrane. N-linked (GlcNAc...) asparagine glycosylation occurs at Asn202. A helical transmembrane segment spans residues 223 to 243 (YHICFFLVTYMAPLCLMVLAY). The Cytoplasmic portion of the chain corresponds to 244 to 304 (LQIFRKLWCR…QIRARRKTAR (61 aa)). Residues 305 to 326 (MLMVVLLVFAICYLPISILNVL) form a helical membrane-spanning segment. Residues 327-342 (KRVFGMFTHTEDRETV) are Extracellular-facing. Residues 343–366 (YAWFTFSHWLVYANSAANPIIYNF) form a helical membrane-spanning segment. At 367–444 (LSGKFREEFK…ANGAGPLQNW (78 aa)) the chain is on the cytoplasmic side.

It belongs to the G-protein coupled receptor 1 family.

The protein localises to the cell membrane. In terms of biological role, nonselective, high-affinity receptor for both orexin-A and orexin-B neuropeptides. Triggers an increase in cytoplasmic Ca(2+) levels in response to orexin-A binding. In Canis lupus familiaris (Dog), this protein is Orexin receptor type 2 (HCRTR2).